A 427-amino-acid chain; its full sequence is Trigger factor (427 aa).

The PPIase FKBP-type domain occupies 163 to 248 (GDVVNLDFDG…INEVKSKEVP (86 aa)).

This sequence belongs to the FKBP-type PPIase family. Tig subfamily.

It localises to the cytoplasm. The catalysed reaction is [protein]-peptidylproline (omega=180) = [protein]-peptidylproline (omega=0). In terms of biological role, involved in protein export. Acts as a chaperone by maintaining the newly synthesized protein in an open conformation. Functions as a peptidyl-prolyl cis-trans isomerase. This is Trigger factor from Macrococcus caseolyticus (strain JCSC5402) (Macrococcoides caseolyticum).